Consider the following 504-residue polypeptide: Glycerol kinase (504 aa).

An ADP-binding site is contributed by T12. T12, T13, and S14 together coordinate ATP. T12 provides a ligand contact to sn-glycerol 3-phosphate. R16 is an ADP binding site. Positions 82, 83, 134, and 249 each coordinate sn-glycerol 3-phosphate. Positions 82, 83, 134, 249, and 250 each coordinate glycerol. The ADP site is built by T271 and G315. Positions 271, 315, 319, and 416 each coordinate ATP. G416 and N420 together coordinate ADP.

This sequence belongs to the FGGY kinase family.

The catalysed reaction is glycerol + ATP = sn-glycerol 3-phosphate + ADP + H(+). Its pathway is polyol metabolism; glycerol degradation via glycerol kinase pathway; sn-glycerol 3-phosphate from glycerol: step 1/1. Its activity is regulated as follows. Inhibited by fructose 1,6-bisphosphate (FBP). Key enzyme in the regulation of glycerol uptake and metabolism. Catalyzes the phosphorylation of glycerol to yield sn-glycerol 3-phosphate. The protein is Glycerol kinase of Mycobacteroides abscessus (strain ATCC 19977 / DSM 44196 / CCUG 20993 / CIP 104536 / JCM 13569 / NCTC 13031 / TMC 1543 / L948) (Mycobacterium abscessus).